The following is a 285-amino-acid chain: 4-hydroxybenzoate octaprenyltransferase (285 aa).

Transmembrane regions (helical) follow at residues 33-53 (FLAA…LGVV), 93-113 (LILF…MNTL), 134-154 (ITYL…PMAY), 166-186 (WLLF…YAMV), 209-229 (LMIG…GIQL), 233-253 (SLYN…QWLI), and 265-285 (FLNN…SVLI).

It belongs to the UbiA prenyltransferase family. Mg(2+) is required as a cofactor.

The protein resides in the cell inner membrane. The catalysed reaction is all-trans-octaprenyl diphosphate + 4-hydroxybenzoate = 4-hydroxy-3-(all-trans-octaprenyl)benzoate + diphosphate. It functions in the pathway cofactor biosynthesis; ubiquinone biosynthesis. Functionally, catalyzes the prenylation of para-hydroxybenzoate (PHB) with an all-trans polyprenyl group. Mediates the second step in the final reaction sequence of ubiquinone-8 (UQ-8) biosynthesis, which is the condensation of the polyisoprenoid side chain with PHB, generating the first membrane-bound Q intermediate 3-octaprenyl-4-hydroxybenzoate. The polypeptide is 4-hydroxybenzoate octaprenyltransferase (Aliivibrio salmonicida (strain LFI1238) (Vibrio salmonicida (strain LFI1238))).